Consider the following 257-residue polypeptide: Imidazole glycerol phosphate synthase subunit HisF (257 aa).

Active-site residues include Asp-11 and Asp-130.

This sequence belongs to the HisA/HisF family. Heterodimer of HisH and HisF.

Its subcellular location is the cytoplasm. It catalyses the reaction 5-[(5-phospho-1-deoxy-D-ribulos-1-ylimino)methylamino]-1-(5-phospho-beta-D-ribosyl)imidazole-4-carboxamide + L-glutamine = D-erythro-1-(imidazol-4-yl)glycerol 3-phosphate + 5-amino-1-(5-phospho-beta-D-ribosyl)imidazole-4-carboxamide + L-glutamate + H(+). The protein operates within amino-acid biosynthesis; L-histidine biosynthesis; L-histidine from 5-phospho-alpha-D-ribose 1-diphosphate: step 5/9. In terms of biological role, IGPS catalyzes the conversion of PRFAR and glutamine to IGP, AICAR and glutamate. The HisF subunit catalyzes the cyclization activity that produces IGP and AICAR from PRFAR using the ammonia provided by the HisH subunit. In Shewanella piezotolerans (strain WP3 / JCM 13877), this protein is Imidazole glycerol phosphate synthase subunit HisF.